Consider the following 257-residue polypeptide: Imidazole glycerol phosphate synthase subunit HisF (257 aa).

Active-site residues include D11 and D130.

It belongs to the HisA/HisF family. Heterodimer of HisH and HisF.

It localises to the cytoplasm. The catalysed reaction is 5-[(5-phospho-1-deoxy-D-ribulos-1-ylimino)methylamino]-1-(5-phospho-beta-D-ribosyl)imidazole-4-carboxamide + L-glutamine = D-erythro-1-(imidazol-4-yl)glycerol 3-phosphate + 5-amino-1-(5-phospho-beta-D-ribosyl)imidazole-4-carboxamide + L-glutamate + H(+). It participates in amino-acid biosynthesis; L-histidine biosynthesis; L-histidine from 5-phospho-alpha-D-ribose 1-diphosphate: step 5/9. Its function is as follows. IGPS catalyzes the conversion of PRFAR and glutamine to IGP, AICAR and glutamate. The HisF subunit catalyzes the cyclization activity that produces IGP and AICAR from PRFAR using the ammonia provided by the HisH subunit. The sequence is that of Imidazole glycerol phosphate synthase subunit HisF from Pseudoalteromonas atlantica (strain T6c / ATCC BAA-1087).